The primary structure comprises 130 residues: Galectin-2 (130 aa).

Residues 4 to 130 (KFEVKDLNMK…GLQISSFKLE (127 aa)) form the Galectin domain. 65-71 (WGQEQRE) is an a beta-D-galactoside binding site.

In terms of assembly, homodimer.

In terms of biological role, this protein binds beta-galactoside. Its physiological function is not yet known. The sequence is that of Galectin-2 (Lgals2) from Mus musculus (Mouse).